Reading from the N-terminus, the 285-residue chain is Vacuolar protein sorting-associated protein 37B (285 aa).

Residues 50–170 (ASNRSLAEGN…EMVLKGQRLP (121 aa)) form an interaction with IST1 region. Positions 84–173 (FEAYQIKKTK…LKGQRLPQAL (90 aa)) constitute a VPS37 C-terminal domain. A disordered region spans residues 175 to 201 (PLPPRLPELAPTAPLPYPAPEASGPPA). Residue Arg-218 is modified to Omega-N-methylarginine. The tract at residues 230 to 285 (GQAVPYPGLQCPPLPPRVGLPTQQGFSSQFVSPYPPPLPQRPPPRLPPHQPGFILQ) is disordered. The segment covering 250–260 (PTQQGFSSQFV) has biased composition (polar residues). Over residues 262-279 (PYPPPLPQRPPPRLPPHQ) the composition is skewed to pro residues.

Belongs to the VPS37 family. Component of the ESCRT-I complex (endosomal sorting complex required for transport I) which consists of TSG101, VPS28, a VPS37 protein (VPS37A to -D) and MVB12A or MVB12B in a 1:1:1:1 stoichiometry. Interacts with TSG101, VPS28, MVB12A and MVB12B. Component of the ESCRT-I complex (endosomal sorting complex required for transport I) which consists of TSG101, VPS28, a VPS37 protein (VPS37A to -D) and UBAP1 in a 1:1:1:1 stoichiometry. Interacts with CEP55. Interacts with IST1. As to expression, widely expressed. Expressed in macrophages and lymphocytes.

The protein resides in the late endosome membrane. Its function is as follows. Component of the ESCRT-I complex, a regulator of vesicular trafficking process. Required for the sorting of endocytic ubiquitinated cargos into multivesicular bodies. May be involved in cell growth and differentiation. The protein is Vacuolar protein sorting-associated protein 37B (VPS37B) of Homo sapiens (Human).